Here is a 346-residue protein sequence, read N- to C-terminus: Methionine import ATP-binding protein MetN 1 (346 aa).

Residues Ile2–Val241 form the ABC transporter domain. Gly38–Ser45 lines the ATP pocket.

It belongs to the ABC transporter superfamily. Methionine importer (TC 3.A.1.24) family. The complex is composed of two ATP-binding proteins (MetN), two transmembrane proteins (MetI) and a solute-binding protein (MetQ).

It is found in the cell membrane. The catalysed reaction is L-methionine(out) + ATP + H2O = L-methionine(in) + ADP + phosphate + H(+). It catalyses the reaction D-methionine(out) + ATP + H2O = D-methionine(in) + ADP + phosphate + H(+). Its function is as follows. Part of the ABC transporter complex MetNIQ involved in methionine import. Responsible for energy coupling to the transport system. The sequence is that of Methionine import ATP-binding protein MetN 1 from Bacillus cereus (strain ZK / E33L).